The following is a 260-amino-acid chain: Pyridoxine 5'-phosphate synthase (260 aa).

Residues Asn10 and Arg21 each contribute to the 3-amino-2-oxopropyl phosphate site. The active-site Proton acceptor is His46. 1-deoxy-D-xylulose 5-phosphate contacts are provided by Arg48 and His53. The active-site Proton acceptor is the Glu76. Thr113 provides a ligand contact to 1-deoxy-D-xylulose 5-phosphate. Residue His204 is the Proton donor of the active site. 3-amino-2-oxopropyl phosphate-binding positions include Asp205 and 227-228 (GH).

It belongs to the PNP synthase family. As to quaternary structure, homooctamer; tetramer of dimers.

Its subcellular location is the cytoplasm. It carries out the reaction 3-amino-2-oxopropyl phosphate + 1-deoxy-D-xylulose 5-phosphate = pyridoxine 5'-phosphate + phosphate + 2 H2O + H(+). It participates in cofactor biosynthesis; pyridoxine 5'-phosphate biosynthesis; pyridoxine 5'-phosphate from D-erythrose 4-phosphate: step 5/5. In terms of biological role, catalyzes the complicated ring closure reaction between the two acyclic compounds 1-deoxy-D-xylulose-5-phosphate (DXP) and 3-amino-2-oxopropyl phosphate (1-amino-acetone-3-phosphate or AAP) to form pyridoxine 5'-phosphate (PNP) and inorganic phosphate. This Xylella fastidiosa (strain 9a5c) protein is Pyridoxine 5'-phosphate synthase.